The sequence spans 82 residues: Large ribosomal subunit protein uL29 (82 aa).

The protein belongs to the universal ribosomal protein uL29 family.

This is Large ribosomal subunit protein uL29 from Trichodesmium erythraeum (strain IMS101).